Here is a 133-residue protein sequence, read N- to C-terminus: Ribosomal RNA large subunit methyltransferase H 1 (133 aa).

Residues I55, G89, and I101–M106 contribute to the S-adenosyl-L-methionine site.

The protein belongs to the RNA methyltransferase RlmH family. Homodimer.

The protein resides in the cytoplasm. The catalysed reaction is pseudouridine(1915) in 23S rRNA + S-adenosyl-L-methionine = N(3)-methylpseudouridine(1915) in 23S rRNA + S-adenosyl-L-homocysteine + H(+). Specifically methylates the pseudouridine at position 1915 (m3Psi1915) in 23S rRNA. The polypeptide is Ribosomal RNA large subunit methyltransferase H 1 (Thermoanaerobacter sp. (strain X514)).